A 352-amino-acid polypeptide reads, in one-letter code: Ion-translocating oxidoreductase complex subunit D (352 aa).

5 consecutive transmembrane segments (helical) span residues 20-40 (IMLLVLLAAVPGIAAQLRFFG), 42-62 (GTLVQILLASVSALLAEALVL), 78-109 (ALLTGLLLAVSIPPLAPWWMVVLGTVFAVIIA), 123-143 (PAMIGYVVLLISFPVQMTSWL), and 148-168 (IAVNIPGFIDAIQVIFSGHTA). An FMN phosphoryl threonine modification is found at Thr-187. 4 consecutive transmembrane segments (helical) span residues 214 to 234 (ILAGAGWQWVNLAWLAGGVWL), 242 to 262 (WHIPLSFLVTLALCATLGWLF), 267 to 287 (LAAPQIHLLSGATMLGAFFIL), and 301 to 318 (LMFGALAGLLVWLIRSFG).

It belongs to the NqrB/RnfD family. The complex is composed of six subunits: RsxA, RsxB, RsxC, RsxD, RsxE and RsxG. FMN is required as a cofactor.

It localises to the cell inner membrane. In terms of biological role, part of a membrane-bound complex that couples electron transfer with translocation of ions across the membrane. Required to maintain the reduced state of SoxR. This Shigella flexneri protein is Ion-translocating oxidoreductase complex subunit D.